Here is a 54-residue protein sequence, read N- to C-terminus: uncharacterized protein (54 aa).

The signal sequence occupies residues 1-13; the sequence is MLLCFHMCQRIMW.

It is found in the secreted. This is an uncharacterized protein from Saccharomyces cerevisiae (strain ATCC 204508 / S288c) (Baker's yeast).